Here is a 321-residue protein sequence, read N- to C-terminus: Probable E3 ubiquitin-protein ligase BAH1-like 1 (321 aa).

The SPX domain maps to 1-149 (MKFAKKYEKY…YSKQGQEFKA (149 aa)). An RING-type zinc finger spans residues 217–266 (CSICLDTVFDPVALSCGHIYCYLCSCSAASVTIVDGLKSAERKSKCPLCR).

The protein belongs to the RING-type zinc finger family.

It carries out the reaction S-ubiquitinyl-[E2 ubiquitin-conjugating enzyme]-L-cysteine + [acceptor protein]-L-lysine = [E2 ubiquitin-conjugating enzyme]-L-cysteine + N(6)-ubiquitinyl-[acceptor protein]-L-lysine.. It functions in the pathway protein modification; protein ubiquitination. The polypeptide is Probable E3 ubiquitin-protein ligase BAH1-like 1 (Oryza sativa subsp. indica (Rice)).